A 541-amino-acid chain; its full sequence is Multidrug transporter protein MdtP (541 aa).

The next 14 membrane-spanning stretches (helical) occupy residues 14–34 (LLITGLIIAMFFSALDGTIVG), 40–60 (IVGDLGGLSMMTWLTTAYLLT), 79–99 (IVYVSGLIIFMAASALCGMAN), 112–132 (GIGGGIMMPMAMIVIGDLFTG), 141–161 (VFGAIYGLASVIGPQIGGWIV), 168–188 (WVFYINLPVGIIAVIFIARGL), 201–221 (IAGIFTMIVGVVSLLLALSFG), 229–249 (SWQILGLFALALIGIVSFIIV), 273–293 (LIGFFMSIGMFGAITFVPFFM), 307–327 (IMTPMMISMIITSIIGGQLVY), 329–349 (IGIKPQIITGMLVMAGGFLLL), 359–379 (LVATSFMAIIGLGMGLVMPIL), 401–420 (FFRSIGGTFGITMLGAVMNA), and 492–512 (LHSVFYTGLIFIAVGAVFTLF).

This sequence belongs to the major facilitator superfamily. EmrB family.

Its subcellular location is the cell membrane. In terms of biological role, multidrug efflux transporter. Contributes to resistance to several antibiotics, including fusidic acid, novobiocin, streptomycin and actinomycin, possibly by pumping these structurally unrelated antibiotics out of cells. The sequence is that of Multidrug transporter protein MdtP from Bacillus subtilis (strain 168).